Consider the following 170-residue polypeptide: MTLLSQNELRELVLANPPLVENMIDMDTQLQPNGVEMTLKEIRTIKSPGAVDFDNSGRRLSEGDTIEFNEDGWIHLDPGVYKVLLNEIVNIPKDLAAIAKPRSTLIRCGATLETAVWDAGYSGRSECMIVVHNKDGFDLKKDARIMQLLFYHLHTEVEEGYSGSYQNENI.

This sequence belongs to the dCTP deaminase family. Archaeal dUTPase subfamily.

The enzyme catalyses dUTP + H2O = dUMP + diphosphate + H(+). Its pathway is pyrimidine metabolism; dUMP biosynthesis; dUMP from dCTP (dUTP route): step 2/2. In terms of biological role, this enzyme is involved in nucleotide metabolism: it produces dUMP, the immediate precursor of thymidine nucleotides and it decreases the intracellular concentration of dUTP so that uracil cannot be incorporated into DNA. The polypeptide is Probable deoxyuridine 5'-triphosphate nucleotidohydrolase (Methanococcoides burtonii (strain DSM 6242 / NBRC 107633 / OCM 468 / ACE-M)).